A 117-amino-acid chain; its full sequence is MNTVRVTFLLVFVLAVSLGQADEDGNRMEMRQEIEKTEADSSYFAENLLLQKLEELEAKLWEETSEESRNSRQKRCAAEGIPCDPNPVKDLPCCSGLACLKPTLHGIWYKHHYCYTQ.

The N-terminal stretch at Met1–Ala21 is a signal peptide. A propeptide spanning residues Asp22–Arg75 is cleaved from the precursor. 3 disulfides stabilise this stretch: Cys76-Cys94, Cys83-Cys99, and Cys93-Cys114.

This sequence belongs to the neurotoxin 14 (magi-1) family. 01 (HNTX-16) subfamily. Expressed by the venom gland.

It is found in the secreted. Probable ion channel inhibitor. This chain is U9-theraphotoxin-Hhn1a, found in Cyriopagopus hainanus (Chinese bird spider).